Here is a 559-residue protein sequence, read N- to C-terminus: Glycerol kinase (559 aa).

Thr20 lines the ADP pocket. ATP contacts are provided by Thr20, Ser21, and Ser22. Thr20 lines the sn-glycerol 3-phosphate pocket. ADP is bound at residue Arg24. Arg94, Glu95, and Tyr148 together coordinate sn-glycerol 3-phosphate. Residues Arg94, Glu95, and Tyr148 each contribute to the glycerol site. Gly252 contacts beta-D-fructose 1,6-bisphosphate. Asp265 contributes to the sn-glycerol 3-phosphate binding site. Residues Asp265 and Gln266 each contribute to the glycerol site. Residues Thr287, Gly332, Gly433, and Asn437 each contribute to the ADP site. The ATP site is built by Thr287, Gly332, and Gly433. A helical membrane pass occupies residues 532-552 (IFCSLPLGFFIVSSMVMLIGA).

This sequence belongs to the FGGY kinase family. Widely expressed in fetal and adult tissues. As to expression, the sole isoform expressed in adult liver and kidney.

The protein localises to the mitochondrion outer membrane. It localises to the nucleus. It is found in the cytoplasm. Its subcellular location is the cytosol. The enzyme catalyses glycerol + ATP = sn-glycerol 3-phosphate + ADP + H(+). It participates in polyol metabolism; glycerol degradation via glycerol kinase pathway; sn-glycerol 3-phosphate from glycerol: step 1/1. Potassium and magnesium-dependent. Its function is as follows. Kinase that plays a key role in glycerol metabolism, catalyzing its phosphorylation to produce sn-glycerol 3-phosphate. Sn-glycerol 3-phosphate is a crucial intermediate in various metabolic pathways, such as the synthesis of glycerolipids and triglycerides, glycogenesis, glycolysis and gluconeogenesis. This chain is Glycerol kinase, found in Homo sapiens (Human).